Reading from the N-terminus, the 226-residue chain is V-type proton ATPase subunit E (226 aa).

It belongs to the V-ATPase E subunit family. V-ATPase is a heteromultimeric enzyme made up of two complexes: the ATP-hydrolytic V1 complex and the proton translocation V0 complex. The V1 complex consists of three catalytic AB heterodimers that form a heterohexamer, three peripheral stalks each consisting of EG heterodimers, one central rotor including subunits D and F, and the regulatory subunits C and H. The proton translocation complex V0 consists of the proton transport subunit a, a ring of proteolipid subunits c9c'', rotary subunit d, subunits e and f, and the accessory subunits vah-19/Ac45 and vah-20/PRR. In terms of tissue distribution, expressed in the excretory cell and syncytial hypodermal cells (at protein level). Expressed in the intestine (at protein level).

Its subcellular location is the cytoplasm. It is found in the apical cell membrane. Functionally, subunit of the V1 complex of vacuolar(H+)-ATPase (V-ATPase), a multisubunit enzyme composed of a peripheral complex (V1) that hydrolyzes ATP and a membrane integral complex (V0) that translocates protons. V-ATPase is responsible for acidifying and maintaining the pH of intracellular compartments and in some cell types, is targeted to the plasma membrane, where it is responsible for acidifying the extracellular environment. Regulates pH homeostasis in the intestine. Probably by regulating cytoplasmic pH, required for cell survival in the intestine and hypodermis. Involved in receptor-mediated endocytosis. Involved in embryogenesis and larval development. The sequence is that of V-type proton ATPase subunit E from Caenorhabditis elegans.